The primary structure comprises 144 residues: uncharacterized protein (144 aa).

Positions 1-24 (MGKVIQFPFGEEPEKKEEKELKTE) are disordered. The segment covering 12–24 (EPEKKEEKELKTE) has biased composition (basic and acidic residues).

This is an uncharacterized protein from Aquifex aeolicus (strain VF5).